The chain runs to 434 residues: Probable transcription factor HMS1 (434 aa).

The region spanning 266–341 (TGRVSHNIIE…TKSIEYICHL (76 aa)) is the bHLH domain. A disordered region spans residues 365-434 (HLTEPSQPLS…DMDFNNAGDF (70 aa)). Polar residues-rich tracts occupy residues 368 to 382 (EPSQ…SEQV) and 402 to 423 (PLHN…TNNS).

In terms of assembly, interacts with the G1/S-specific cyclin PCL1. Phosphorylated by the cyclin-CDK complex PCL1-PHO85.

It localises to the nucleus. Functionally, involved in exit from mitosis and pseudohyphal differentiation. This Saccharomyces cerevisiae (strain ATCC 204508 / S288c) (Baker's yeast) protein is Probable transcription factor HMS1 (HMS1).